We begin with the raw amino-acid sequence, 595 residues long: MPRLWYSRYLASARLRCRPLLISEQYGARIYQHLLRRTINTEANVQRPNDIVPLRKQLKEEAKRSKSQSRNGRGKKQVAANNEWELTVGIEIHAQLNSEAKLFSRAPTSTVAEPNSNVALFDLAFPGSQPEFQAATLLPALRAAIALNCEVQHTSRFDRKHYFYQDQPAGYQITQYYEPFARNGFIKLYDYDGIAPEDGKFVRIDIKQMQLEQDTAKSHEHPPSAHFLDFNRVSHPLIEIITMPQIHSPATAAACVRKIQAILQATSAVTTGMELGGLRADVNVSVRRRDAPPGAGEYYGVRGLGQRTEIKNLSSFKAVEDAIIAERDRQIRVLESGGTVEVETRGWSIGSTETRKLRSKEGEVDYRYMPDPDLHPLFIDDGLVSTLKENLPTLPDQLLAMLVGPMYGLSLEDAKPLVELDDGARLEYYQDVFDVLQALHSDDRDAAKKGLGRTAANWVLHELGALHTKAEVAWHADRIPAQTLAELIDQLIRKKITSSVAKQVLVMVFEGDQRPIQQLLEEENLLLRPLCREEYIALANSLIEENPQMVAQIREKNQLGKIGWFVGQMVRQGEKGRVEAQRAEEILRELILKRN.

Residues 1–114 (MPRLWYSRYL…RAPTSTVAEP (114 aa)) constitute a mitochondrion transit peptide. Residues 59-78 (KEEAKRSKSQSRNGRGKKQV) are disordered.

This sequence belongs to the GatB/GatE family. GatB subfamily. In terms of assembly, subunit of the heterotrimeric GatCAB amidotransferase (AdT) complex, composed of A, B and C subunits.

It localises to the mitochondrion. It carries out the reaction L-glutamyl-tRNA(Gln) + L-glutamine + ATP + H2O = L-glutaminyl-tRNA(Gln) + L-glutamate + ADP + phosphate + H(+). In terms of biological role, allows the formation of correctly charged Gln-tRNA(Gln) through the transamidation of misacylated Glu-tRNA(Gln) in the mitochondria. The reaction takes place in the presence of glutamine and ATP through an activated gamma-phospho-Glu-tRNA(Gln). The chain is Glutamyl-tRNA(Gln) amidotransferase subunit B, mitochondrial from Talaromyces stipitatus (strain ATCC 10500 / CBS 375.48 / QM 6759 / NRRL 1006) (Penicillium stipitatum).